The sequence spans 433 residues: CinA-like protein (433 aa).

This sequence belongs to the CinA family.

The sequence is that of CinA-like protein from Frankia casuarinae (strain DSM 45818 / CECT 9043 / HFP020203 / CcI3).